Reading from the N-terminus, the 478-residue chain is Zinc metalloproteinase/disintegrin (478 aa).

The first 20 residues, 1 to 20 (MIEVLLVTICLAAFPYQGSS), serve as a signal peptide directing secretion. Positions 21-187 (IILESGNVND…PIKKASQSNL (167 aa)) are excised as a propeptide. 3 disulfides stabilise this stretch: Cys-304–Cys-384, Cys-344–Cys-368, and Cys-346–Cys-351. His-329 lines the Zn(2+) pocket. Glu-330 is a catalytic residue. Zn(2+)-binding residues include His-333 and His-339. The propeptide occupies 390–405 (LRTDTVSTPVSGNELL). Residues 397-478 (TPVSGNELLE…AGCPRNPFHA (82 aa)) enclose the Disintegrin domain. 6 cysteine pairs are disulfide-bonded: Cys-411/Cys-426, Cys-413/Cys-421, Cys-420/Cys-443, Cys-434/Cys-440, Cys-439/Cys-464, and Cys-452/Cys-471. A Cell attachment site motif is present at residues 456–458 (RGD).

It belongs to the venom metalloproteinase (M12B) family. P-II subfamily. P-IIa sub-subfamily. As to quaternary structure, monomer. As to expression, expressed by the venom gland.

The protein resides in the secreted. Binds alpha-5/beta-1 (ITGAV/ITGB1), alpha-V/beta-3 (ITGAV/ITGB3) and alpha-M/beta-2 (ITGAM/ITGB2) integrins. Is a potent inhibitor of platelet aggregation induced by ADP, collagen, and thrombin. Induces neutrophil chemotaxis and inhibits the chemotaxis of human neutrophils toward fMLP, IL-8, and jarastatin itself. Directly activates an integrin-coupled signaling and modulate the MAPK pathway in different ways, leading the neutrophils to express different functional response. Induces Erk-2 translocation to nucleus and a delay of the spontaneous apoptosis of neutrophils. Increases the IL-8 mRNA levels in neutrophils. When injected simultaneously with melanoma cells in mice, jarastatin, flavoridin (FL) and kistrin (KR) significantly reduce tumor lung colonization. Inhibits mouse melanoma B16F10 cell growth in vitro. When it interacts with melanoma cells, it induces actin cytoskeleton rearrangement, increasing actin polymerization and PTK2/FAK1 phosphorylation. Interferes with NF-kappaB translocation in melanoma cells. This Bothrops jararaca (Jararaca) protein is Zinc metalloproteinase/disintegrin.